Here is a 167-residue protein sequence, read N- to C-terminus: Photosystem I assembly protein Ycf3 (167 aa).

TPR repeat units lie at residues 35 to 68, 72 to 105, and 120 to 153; these read AFAYYRDGMSAQSEGEYAEALQNYYEAMRLEVDA, SYILYNIGLIHTSNGEHARALEYYYQALERNPSL, and GEQAIEKGQAEISSLLFDKAADYWKEAIRLAPTN.

Belongs to the Ycf3 family.

The protein resides in the plastid. Its subcellular location is the chloroplast thylakoid membrane. Essential for the assembly of the photosystem I (PSI) complex. May act as a chaperone-like factor to guide the assembly of the PSI subunits. This chain is Photosystem I assembly protein Ycf3, found in Stigeoclonium helveticum (Green alga).